A 238-amino-acid chain; its full sequence is Ribonuclease PH (238 aa).

Phosphate-binding positions include Arg-86 and 124 to 126 (GTR).

The protein belongs to the RNase PH family. As to quaternary structure, homohexameric ring arranged as a trimer of dimers.

It carries out the reaction tRNA(n+1) + phosphate = tRNA(n) + a ribonucleoside 5'-diphosphate. Its function is as follows. Phosphorolytic 3'-5' exoribonuclease that plays an important role in tRNA 3'-end maturation. Removes nucleotide residues following the 3'-CCA terminus of tRNAs; can also add nucleotides to the ends of RNA molecules by using nucleoside diphosphates as substrates, but this may not be physiologically important. Probably plays a role in initiation of 16S rRNA degradation (leading to ribosome degradation) during starvation. The protein is Ribonuclease PH of Solibacter usitatus (strain Ellin6076).